A 182-amino-acid polypeptide reads, in one-letter code: MSLQTLQTELKAKLRQYQDFPSKGIVFEDILPIFQDPKSFQQLIDAFKLHIKDTFGDKKIDVIVGLDARGFLFGPTLALAIGAAFVPVRKQGKLPGKTVHAEFQKEYGKDVFEIQEDAIKPGQTVIVVDDIIATGGSAACAGDLVTKLKGEVLEFIFILELLFLKGRDKLCAPAYTLLSGQE.

133 to 137 (ATGGS) is an AMP binding site.

The protein belongs to the purine/pyrimidine phosphoribosyltransferase family. Homodimer. Mg(2+) serves as cofactor.

Its subcellular location is the cytoplasm. It is found in the nucleus. The enzyme catalyses AMP + diphosphate = 5-phospho-alpha-D-ribose 1-diphosphate + adenine. It participates in purine metabolism; AMP biosynthesis via salvage pathway; AMP from adenine: step 1/1. In terms of biological role, catalyzes a salvage reaction resulting in the formation of AMP, that is energically less costly than de novo synthesis. The protein is Adenine phosphoribosyltransferase (APT1) of Yarrowia lipolytica (strain CLIB 122 / E 150) (Yeast).